A 453-amino-acid chain; its full sequence is uncharacterized protein (453 aa).

Residues L5–N63 form the TRAM domain. [4Fe-4S] cluster-binding residues include C76, C82, C85, and C162. The S-adenosyl-L-methionine site is built by Q285, Y314, E335, and D383. C410 serves as the catalytic Nucleophile.

Belongs to the class I-like SAM-binding methyltransferase superfamily. RNA M5U methyltransferase family.

This is an uncharacterized protein from Listeria innocua serovar 6a (strain ATCC BAA-680 / CLIP 11262).